Reading from the N-terminus, the 405-residue chain is Double C2-like domain-containing protein alpha (405 aa).

Residues 1–94 (MRGRRGDRMT…DSYDSDDTTA (94 aa)) are interaction with UNC13D and DYNLT1. Residues 34–54 (DYFPRRGPGPEGGGGGGGTGC) form a disordered region. Positions 42 to 54 (GPEGGGGGGGTGC) are enriched in gly residues. 2 consecutive C2 domains span residues 94 to 216 (ALGT…HFNI) and 256 to 389 (ERGR…ERWH). Ca(2+) contacts are provided by aspartate 125, aspartate 131, aspartate 186, aspartate 188, aspartate 287, aspartate 293, aspartate 347, aspartate 349, and aspartate 355. Positions 220-405 (RQVPLPSPSS…PPAAGAYPLA (186 aa)) are interaction with UNC13D.

In terms of assembly, interacts (via N-terminus) with UNC13A. Interacts with cytoplasmic dynein light chain DYNLT1. Interacts with UNC13D. Ca(2+) serves as cofactor. In terms of tissue distribution, brain and mast cells.

The protein localises to the cytoplasmic vesicle. It localises to the secretory vesicle. Its subcellular location is the synaptic vesicle membrane. The protein resides in the synapse. It is found in the synaptosome. The protein localises to the lysosome. Functionally, calcium sensor which most probably regulates fusion of vesicles with membranes. Binds calcium and phospholipids. May be involved in calcium dependent neurotransmitter release through the interaction with UNC13A. May be involved in calcium-dependent spontaneous release of neurotransmitter in absence of action potentials in neuronal cells. Regulates Ca(2+)-dependent secretory lysosome exocytosis in mast cells. In Mus musculus (Mouse), this protein is Double C2-like domain-containing protein alpha (Doc2a).